The primary structure comprises 393 residues: Staphopain B (393 aa).

The signal sequence occupies residues 1–36 (MNSSYKSRVFNIISIIMVSMLILSLGAFANNNKAKA). Positions 37–219 (DSHSKQLEIN…KVEENEAIQE (183 aa)) are excised as a propeptide. Catalysis depends on residues C243, H340, and N360.

Belongs to the peptidase C47 family. In terms of assembly, in the cytoplasm, prematurely activated/folded SspB forms a stable non-covalent complex with SspC. Proteolytically cleaved by staphylococcal serine protease (SspA).

The protein localises to the secreted. Prematurely activated/folded staphopain B is inhibited by staphostatin B (SspC), which is probably required to protect staphylococcal cytoplasmic proteins from degradation by SspB. Its function is as follows. Cysteine protease that plays an important role in the inhibition of host innate immune response. Degrades host elastin, fibrogen, fibronectin and kininogen. Blocks phagocytosis of opsonised S.aureus by neutrophils and monocytes by inducing their death in a proteolytic activity-dependent manner. Decreases surface expression of the 'don't eat me' signal CD31 on neutrophils. Cleaves host galectin-3/LGALS3, thereby inhibiting the neutrophil-activating ability of the lectin. This is Staphopain B (sspB) from Staphylococcus aureus (strain Mu50 / ATCC 700699).